We begin with the raw amino-acid sequence, 752 residues long: Lid2 complex component jmj3 (752 aa).

A JmjN domain is found at 34 to 75 (IPVVEPKISEFVDMESFIRRVERLGKKYGAIKVVRPSSVLNP). The 172-residue stretch at 162–333 (YTNRPSIPFY…NYEFSNLRRL (172 aa)) folds into the JmjC domain. Composition is skewed to polar residues over residues 391–402 (SFSQRDFDSPNS) and 409–423 (LMSNHESASTEHFNS). Residues 391–438 (SFSQRDFDSPNSINPPSPLMSNHESASTEHFNSTTTTEKELSSLHVGE) form a disordered region. The span at 427 to 438 (TEKELSSLHVGE) shows a compositional bias: basic and acidic residues.

Component of the Lid2 complex composed of ash2, jmj3, lid2, sdc1 and snt2.

The protein localises to the nucleus. The protein is Lid2 complex component jmj3 of Schizosaccharomyces pombe (strain 972 / ATCC 24843) (Fission yeast).